The primary structure comprises 197 residues: Probable molybdenum cofactor guanylyltransferase (197 aa).

Residues 10 to 12 (LCG), Lys22, Asp73, and Asp102 contribute to the GTP site. Asp102 contributes to the Mg(2+) binding site.

It belongs to the MobA family. Requires Mg(2+) as cofactor.

It is found in the cytoplasm. It catalyses the reaction Mo-molybdopterin + GTP + H(+) = Mo-molybdopterin guanine dinucleotide + diphosphate. Transfers a GMP moiety from GTP to Mo-molybdopterin (Mo-MPT) cofactor (Moco or molybdenum cofactor) to form Mo-molybdopterin guanine dinucleotide (Mo-MGD) cofactor. The protein is Probable molybdenum cofactor guanylyltransferase of Methanothermobacter thermautotrophicus (strain ATCC 29096 / DSM 1053 / JCM 10044 / NBRC 100330 / Delta H) (Methanobacterium thermoautotrophicum).